Consider the following 454-residue polypeptide: Glutaredoxin domain-containing cysteine-rich protein CG31559 (454 aa).

2 disordered regions span residues 30-88 and 217-239; these read ETAD…QRQK and RSAR…GSDS. A compositionally biased stretch (polar residues) spans 33-45; sequence DSGNGSDLESTGL. Low complexity predominate over residues 58-69; it reads SSLGSDSMHGSS. Residues 70 to 84 show a composition bias toward polar residues; the sequence is TEYVRQSASQPSGQR. Residues 217–227 are compositionally biased toward basic and acidic residues; the sequence is RSARSGDEADH. The Glutaredoxin domain occupies 295 to 400; that stretch reads NAKNFKEKDL…QLLKPYKSMA (106 aa).

It belongs to the GRXCR1 family.

This Drosophila melanogaster (Fruit fly) protein is Glutaredoxin domain-containing cysteine-rich protein CG31559.